We begin with the raw amino-acid sequence, 109 residues long: Flagellar hook-basal body complex protein FliE (109 aa).

The protein belongs to the FliE family.

Its subcellular location is the bacterial flagellum basal body. In Pseudomonas fluorescens (strain SBW25), this protein is Flagellar hook-basal body complex protein FliE.